Reading from the N-terminus, the 408-residue chain is 4-O-methyl-glucuronoyl methylesterase 1 (408 aa).

The N-terminal stretch at 1 to 19 is a signal peptide; sequence MASSSRFAALLLLALPALA. 3 disulfide bridges follow: cysteine 31/cysteine 65, cysteine 218/cysteine 354, and cysteine 250/cysteine 326. Residues 217-222 carry the GXSYXG catalytic site motif motif; sequence GCSRDG. Serine 219 acts as the Nucleophile in catalysis. Lysine 223, glutamine 265, and glutamate 273 together coordinate substrate. Asparagine 287 is a glycosylation site (N-linked (GlcNAc...) asparagine). Tryptophan 317 is a substrate binding site. N-linked (GlcNAc...) asparagine glycosylation occurs at asparagine 350. Histidine 353 functions as the Proton donor/acceptor in the catalytic mechanism. N-linked (GlcNAc...) asparagine glycans are attached at residues asparagine 390, asparagine 395, and asparagine 401.

Belongs to the carbohydrate esterase 15 (CE15) family.

The protein resides in the secreted. It catalyses the reaction a 4-O-methyl-alpha-D-glucuronosyl ester derivative + H2O = 4-O-methyl-alpha-D-glucuronate derivative + an alcohol + H(+). Its function is as follows. Glucuronoyl esterase which may play a significant role in biomass degradation, as it is considered to disconnect hemicellulose from lignin through the hydrolysis of the ester bond between 4-O-methyl-D-glucuronic acid residues of glucuronoxylans and aromatic alcohols of lignin. Can hydrolyze benzyl glucuronic acid (BnGlcA), allyl glucuronic acid (allylGlcA) and to a lower degree methyl glucuronic acid (MeGlcA) in vitro. The polypeptide is 4-O-methyl-glucuronoyl methylesterase 1 (Wolfiporia cocos (strain MD-104) (Brown rot fungus)).